The sequence spans 110 residues: Large ribosomal subunit protein P2B (110 aa).

The residue at position 29 (Ser-29) is a Phosphoserine. Lys-49 is covalently cross-linked (Glycyl lysine isopeptide (Lys-Gly) (interchain with G-Cter in ubiquitin)). A disordered region spans residues 66 to 110 (VPTGGASSAAAGAAGAAAGGDAAEEEKEEEAKEESDDDMGFGLFD). Residues 69 to 86 (GGASSAAAGAAGAAAGGD) are compositionally biased toward low complexity. A compositionally biased stretch (acidic residues) spans 87–104 (AAEEEKEEEAKEESDDDM). At Ser-100 the chain carries Phosphoserine.

The protein belongs to the eukaryotic ribosomal protein P1/P2 family. In terms of assembly, component of the large ribosomal subunit (LSU). Mature yeast ribosomes consist of a small (40S) and a large (60S) subunit. The 40S small subunit contains 1 molecule of ribosomal RNA (18S rRNA) and 33 different proteins (encoded by 57 genes). The large 60S subunit contains 3 rRNA molecules (25S, 5.8S and 5S rRNA) and 46 different proteins (encoded by 81 genes). The 5 acidic ribosomal P-proteins form the stalk structure of the 60S subunit. They are organized as a pentameric complex in which uL10/P0 interacts with 2 heterodimers, P1A-P2B and P1B-P2A. Post-translationally, the N-terminus is not modified.

Its subcellular location is the cytoplasm. Functionally, component of the ribosome, a large ribonucleoprotein complex responsible for the synthesis of proteins in the cell. The small ribosomal subunit (SSU) binds messenger RNAs (mRNAs) and translates the encoded message by selecting cognate aminoacyl-transfer RNA (tRNA) molecules. The large subunit (LSU) contains the ribosomal catalytic site termed the peptidyl transferase center (PTC), which catalyzes the formation of peptide bonds, thereby polymerizing the amino acids delivered by tRNAs into a polypeptide chain. The nascent polypeptides leave the ribosome through a tunnel in the LSU and interact with protein factors that function in enzymatic processing, targeting, and the membrane insertion of nascent chains at the exit of the ribosomal tunnel. The polypeptide is Large ribosomal subunit protein P2B (Saccharomyces cerevisiae (strain ATCC 204508 / S288c) (Baker's yeast)).